The following is a 781-amino-acid chain: Homeobox protein SIX4 (781 aa).

Positions 1–10 (MSSSSPTGQI) are enriched in polar residues. Disordered stretches follow at residues 1–55 (MSSS…PLEP) and 270–321 (WFKN…GITN). An N-acetylserine modification is found at Ser2. Positions 223–282 (GEETVYCFKEKSRNALKELYKQNRYPSPAEKRHLAKITGLSLTQVSNWFKNRRQRDRNPS) form a DNA-binding region, homeobox. Composition is skewed to basic and acidic residues over residues 278-290 (DRNP…KSES) and 299-308 (ESSKGHEDLS). Ser640 bears the Phosphoserine mark.

This sequence belongs to the SIX/Sine oculis homeobox family. Interacts with EYA3; acts cooperatively with EYA3 to transactivate target genes through interaction and nuclear translocation of EYA3 protein.

It is found in the nucleus. The protein localises to the cytoplasm. Its function is as follows. Transcriptional regulator which can act as both a transcriptional repressor and activator by binding a DNA sequence on these target genes and is involved in processes like cell differentiation, cell migration and cell survival. Transactivates gene expression by binding a 5'-[CAT]A[CT][CT][CTG]GA[GAT]-3' motif present in the Trex site and a 5'-TCA[AG][AG]TTNC-3' motif present in the MEF3 site of the muscle-specific genes enhancer. Acts cooperatively with EYA proteins to transactivate their target genes through interaction and nuclear translocation of EYA protein. Acts synergistically with SIX1 to regulate target genes involved in formation of various organs, including muscle, kidney, gonad, ganglia, olfactory epithelium and cranial skeleton. Plays a role in several important steps of muscle development. Controls the genesis of hypaxial myogenic progenitors in the dermomyotome by transactivating PAX3 and the delamination and migration of the hypaxial precursors from the ventral lip to the limb buds through the transactivation of PAX3, MET and LBX1. Controls myoblast determination by transactivating MYF5, MYOD1 and MYF6. Controls somitic differentiation in myocyte through MYOG transactivation. Plays a role in synaptogenesis and sarcomere organization by participating in myofiber specialization during embryogenesis by activating fast muscle program in the primary myotome resulting in an up-regulation of fast muscle genes, including ATP2A1, MYL1 and TNNT3. Simultaneously, is also able to activate inhibitors of slow muscle genes, such as SOX6, HRASLS, and HDAC4, thereby restricting the activation of the slow muscle genes. During muscle regeneration, negatively regulates differentiation of muscle satellite cells through down-regulation of MYOG expression. During kidney development regulates the early stages of metanephros development and ureteric bud formation through regulation of GDNF, SALL1, PAX8 and PAX2 expression. Plays a role in gonad development by regulating both testis determination and size determination. In gonadal sex determination, transactivates ZFPM2 by binding a MEF3 consensus sequence, resulting in SRY up-regulation. In gonadal size determination, transactivates NR5A1 by binding a MEF3 consensus sequence resulting in gonadal precursor cell formation regulation. During olfactory development mediates the specification and patterning of olfactory placode through fibroblast growth factor and BMP4 signaling pathways and also regulates epithelial cell proliferation during placode formation. Promotes survival of sensory neurons during early trigeminal gangliogenesis. In the developing dorsal root ganglia, up-regulates SLC12A2 transcription. Regulates early thymus/parathyroid organogenesis through regulation of GCM2 and FOXN1 expression. Forms gustatory papillae during development of the tongue. Also plays a role during embryonic cranial skeleton morphogenesis. The polypeptide is Homeobox protein SIX4 (SIX4) (Homo sapiens (Human)).